Reading from the N-terminus, the 333-residue chain is Uroporphyrinogen decarboxylase (333 aa).

Residues 21–25 (RQVGR), D70, Y139, S194, and H309 contribute to the substrate site.

The protein belongs to the uroporphyrinogen decarboxylase family. Homodimer.

The protein resides in the cytoplasm. It catalyses the reaction uroporphyrinogen III + 4 H(+) = coproporphyrinogen III + 4 CO2. It functions in the pathway porphyrin-containing compound metabolism; protoporphyrin-IX biosynthesis; coproporphyrinogen-III from 5-aminolevulinate: step 4/4. Its function is as follows. Catalyzes the decarboxylation of four acetate groups of uroporphyrinogen-III to yield coproporphyrinogen-III. This Chlamydia abortus (strain DSM 27085 / S26/3) (Chlamydophila abortus) protein is Uroporphyrinogen decarboxylase.